Reading from the N-terminus, the 870-residue chain is Protein csx2 (870 aa).

The segment at 212–251 (TSPEISDAPPLSGNVDPLPINSPPLTNPVARDIDQTEPED) is disordered. The PH domain occupies 510–614 (TSAKQGLLLA…WIEAIQYSIS (105 aa)). Phosphoserine is present on residues S625, S653, and S655. The segment at 647–672 (RVASVTSPSRHNSDSKEKKQTKSPSL) is disordered. The span at 657–666 (HNSDSKEKKQ) shows a compositional bias: basic and acidic residues. The Arf-GAP domain occupies 670–791 (PSLVKTLKEM…RFIKSSFSHD (122 aa)). The segment at 686–710 (CADCNTTARVEWCAINFPVVLCIDC) adopts a C4-type zinc-finger fold.

The chain is Protein csx2 (csx2) from Schizosaccharomyces pombe (strain 972 / ATCC 24843) (Fission yeast).